Consider the following 379-residue polypeptide: Galactose-1-phosphate uridylyltransferase (379 aa).

Residues 1 to 15 are compositionally biased toward polar residues; that stretch reads MSQSGADPEQRQQAS. The disordered stretch occupies residues 1–20; the sequence is MSQSGADPEQRQQASEADAM. Cysteine 75 contacts Zn(2+). UDP-alpha-D-glucose-binding positions include alanine 81, 97 to 98, and asparagine 173; that span reads ND. A Zn(2+)-binding site is contributed by histidine 184. Histidine 186 serves as the catalytic Tele-UMP-histidine intermediate. UDP-alpha-D-glucose is bound at residue glutamine 188. Zn(2+)-binding residues include glutamate 202, histidine 301, histidine 319, and histidine 321. UDP-alpha-D-glucose contacts are provided by residues 334-337 and 339-340; these read KFMV and YE.

This sequence belongs to the galactose-1-phosphate uridylyltransferase type 1 family. Homodimer. Zn(2+) serves as cofactor.

The enzyme catalyses alpha-D-galactose 1-phosphate + UDP-alpha-D-glucose = alpha-D-glucose 1-phosphate + UDP-alpha-D-galactose. Its pathway is carbohydrate metabolism; galactose metabolism. Functionally, plays an important role in galactose metabolism. The chain is Galactose-1-phosphate uridylyltransferase (Galt) from Rattus norvegicus (Rat).